Reading from the N-terminus, the 474-residue chain is DNA damage checkpoint control protein MEC3 (474 aa).

Ser452 carries the phosphoserine modification.

This sequence belongs to the MEC3 family. Component of the checkpoint clamp complex composed of DDC1, MEC3 and RAD17. The interaction with MEC3 is performed in a RAD17-dependent manner. The checkpoint clamp complex loads onto DNA. Interacts with the DNA polymerase zeta subunit REV7. Also forms a heterotrimer with 2 RAD17 subunits. Interacts with SET1.

It is found in the nucleus. Functionally, component of the checkpoint clamp complex involved in the surveillance mechanism that allows the DNA repair pathways to act to restore the integrity of the DNA prior to DNA synthesis or separation of the replicated chromosomes. Associates with sites of DNA damage and modulates the MEC1 signaling pathway and the activation of RAD53 in response to DNA damage at phase G1. The complex also physically regulates DNA polymerase zeta-dependent mutagenesis by controlling the access of polymerase zeta to damaged DNA. The protein is DNA damage checkpoint control protein MEC3 (MEC3) of Saccharomyces cerevisiae (strain ATCC 204508 / S288c) (Baker's yeast).